Reading from the N-terminus, the 358-residue chain is GMP reductase (358 aa).

Residues 26 to 27, Lys-78, 130 to 132, and 181 to 182 contribute to the NADP(+) site; these read SR, DVA, and IG. Residues Gly-182, Gly-184, and Cys-187 each contribute to the K(+) site. Cys-187 (thioimidate intermediate) is an active-site residue. Thr-189 functions as the Proton donor/acceptor in the catalytic mechanism. Residue Arg-190 coordinates K(+). Residues 220–222, 243–244, 269–271, and 287–291 contribute to the GMP site; these read DGG, GG, GMS, and RASEG. Residues Met-270, 286–287, and 315–318 contribute to the NADP(+) site; these read YR and SACT.

This sequence belongs to the IMPDH/GMPR family. GuaC type 1 subfamily. In terms of assembly, homotetramer.

It carries out the reaction IMP + NH4(+) + NADP(+) = GMP + NADPH + 2 H(+). Catalyzes the irreversible NADPH-dependent deamination of GMP to IMP. It functions in the conversion of nucleobase, nucleoside and nucleotide derivatives of G to A nucleotides, and in maintaining the intracellular balance of A and G nucleotides. This chain is GMP reductase, found in Caenorhabditis elegans.